The chain runs to 86 residues: Cell division topological specificity factor (86 aa).

This sequence belongs to the MinE family.

Prevents the cell division inhibition by proteins MinC and MinD at internal division sites while permitting inhibition at polar sites. This ensures cell division at the proper site by restricting the formation of a division septum at the midpoint of the long axis of the cell. The protein is Cell division topological specificity factor of Shewanella loihica (strain ATCC BAA-1088 / PV-4).